Consider the following 122-residue polypeptide: Basic phospholipase A2 F16 (122 aa).

7 disulfide bridges follow: cysteine 26-cysteine 115, cysteine 28-cysteine 44, cysteine 43-cysteine 95, cysteine 49-cysteine 122, cysteine 50-cysteine 88, cysteine 57-cysteine 81, and cysteine 75-cysteine 86. Positions 27, 29, and 31 each coordinate Ca(2+). Histidine 47 is an active-site residue. Residue aspartate 48 coordinates Ca(2+). Residue aspartate 89 is part of the active site.

Belongs to the phospholipase A2 family. Group II subfamily. D49 sub-subfamily. Ca(2+) is required as a cofactor. As to expression, expressed by the venom gland.

Its subcellular location is the secreted. The catalysed reaction is a 1,2-diacyl-sn-glycero-3-phosphocholine + H2O = a 1-acyl-sn-glycero-3-phosphocholine + a fatty acid + H(+). Its activity is regulated as follows. Pre-incubation with heparin markedly reduces the neurotoxicity of this toxin. In terms of biological role, snake venom phospholipase A2 (PLA2) that produces neuromuscular blockade in chick biventer cervicis preparations in the absence and presence of crotapotin. In contrast, in mouse phrenic nerve-diaphragm preparations, the neuromuscular blockade is dependent on crotapotin. PLA2 catalyzes the calcium-dependent hydrolysis of the 2-acyl groups in 3-sn-phosphoglycerides. The polypeptide is Basic phospholipase A2 F16 (Crotalus durissus terrificus (South American rattlesnake)).